The following is an 868-amino-acid chain: Leucine--tRNA ligase (868 aa).

The short motif at 42–52 is the 'HIGH' region element; the sequence is PYPSGKLHMGH. The 'KMSKS' region signature appears at 627-631; sequence KMSKS. Lys-630 is an ATP binding site.

Belongs to the class-I aminoacyl-tRNA synthetase family.

It is found in the cytoplasm. It carries out the reaction tRNA(Leu) + L-leucine + ATP = L-leucyl-tRNA(Leu) + AMP + diphosphate. The polypeptide is Leucine--tRNA ligase (Pseudomonas putida (strain W619)).